We begin with the raw amino-acid sequence, 201 residues long: FMN-dependent NADH:quinone oxidoreductase (201 aa).

FMN is bound by residues Ser-9 and 16-18; that span reads SYS.

It belongs to the azoreductase type 1 family. In terms of assembly, homodimer. Requires FMN as cofactor.

The enzyme catalyses 2 a quinone + NADH + H(+) = 2 a 1,4-benzosemiquinone + NAD(+). It carries out the reaction N,N-dimethyl-1,4-phenylenediamine + anthranilate + 2 NAD(+) = 2-(4-dimethylaminophenyl)diazenylbenzoate + 2 NADH + 2 H(+). Quinone reductase that provides resistance to thiol-specific stress caused by electrophilic quinones. Its function is as follows. Also exhibits azoreductase activity. Catalyzes the reductive cleavage of the azo bond in aromatic azo compounds to the corresponding amines. The protein is FMN-dependent NADH:quinone oxidoreductase of Mesomycoplasma hyopneumoniae (strain 7448) (Mycoplasma hyopneumoniae).